The chain runs to 193 residues: Segregation and condensation protein B (193 aa).

Belongs to the ScpB family. As to quaternary structure, homodimer. Homodimerization may be required to stabilize the binding of ScpA to the Smc head domains. Component of a cohesin-like complex composed of ScpA, ScpB and the Smc homodimer, in which ScpA and ScpB bind to the head domain of Smc. The presence of the three proteins is required for the association of the complex with DNA.

It is found in the cytoplasm. Its function is as follows. Participates in chromosomal partition during cell division. May act via the formation of a condensin-like complex containing Smc and ScpA that pull DNA away from mid-cell into both cell halves. This is Segregation and condensation protein B from Streptococcus thermophilus (strain ATCC BAA-250 / LMG 18311).